The sequence spans 411 residues: Aspartate kinase (411 aa).

The 84-residue stretch at 265–348 (LTIRGVPDTP…KIAKVSIVGV (84 aa)) folds into the ACT domain.

The protein belongs to the aspartokinase family.

It localises to the cytoplasm. The catalysed reaction is L-aspartate + ATP = 4-phospho-L-aspartate + ADP. It functions in the pathway amino-acid biosynthesis; L-lysine biosynthesis via DAP pathway; (S)-tetrahydrodipicolinate from L-aspartate: step 1/4. Its pathway is amino-acid biosynthesis; L-methionine biosynthesis via de novo pathway; L-homoserine from L-aspartate: step 1/3. It participates in amino-acid biosynthesis; L-threonine biosynthesis; L-threonine from L-aspartate: step 1/5. Its activity is regulated as follows. Allosterically feedback inhibited by L-lysine and L-threonine individually and also subject to a concerted feedback inhibition by these amino acids. In terms of biological role, involved in the biosynthesis of L-aspartate-beta-semialdehyde which is a central intermediate in the biosynthesis of different amino acids (L-lysine, L-methionine, L-threonine). Catalyzes the phosphorylation of the beta-carboxyl group of L-aspartate to yield 4-phospho-L-aspartate. This chain is Aspartate kinase, found in Pseudomonas putida (strain ATCC 47054 / DSM 6125 / CFBP 8728 / NCIMB 11950 / KT2440).